A 244-amino-acid polypeptide reads, in one-letter code: Small ribosomal subunit protein uS3 (244 aa).

The KH type-2 domain occupies 39–110; that stretch reads IRNFIQKKYS…QVRINVVEVE (72 aa). Positions 221–244 are disordered; the sequence is GAIPRRKGSRKPQQFEDRSSNENS. A compositionally biased stretch (basic and acidic residues) spans 233–244; it reads QQFEDRSSNENS.

The protein belongs to the universal ribosomal protein uS3 family. Part of the 30S ribosomal subunit. Forms a tight complex with proteins S10 and S14.

Functionally, binds the lower part of the 30S subunit head. Binds mRNA in the 70S ribosome, positioning it for translation. The sequence is that of Small ribosomal subunit protein uS3 from Prochlorococcus marinus (strain MIT 9515).